The primary structure comprises 600 residues: Phosphoenolpyruvate carboxykinase (ATP) (600 aa).

302–309 contacts ATP; sequence GLSGTGKT.

It belongs to the phosphoenolpyruvate carboxykinase (ATP) family.

The enzyme catalyses oxaloacetate + ATP = phosphoenolpyruvate + ADP + CO2. It participates in carbohydrate biosynthesis; gluconeogenesis. In Emericella nidulans (strain FGSC A4 / ATCC 38163 / CBS 112.46 / NRRL 194 / M139) (Aspergillus nidulans), this protein is Phosphoenolpyruvate carboxykinase (ATP) (acuF).